A 322-amino-acid polypeptide reads, in one-letter code: Phospho-N-acetylmuramoyl-pentapeptide-transferase (322 aa).

The next 10 membrane-spanning stretches (helical) occupy residues 9–29, 54–74, 82–102, 122–142, 145–165, 176–196, 200–220, 227–247, 255–275, and 302–322; these read IALVSSLVLTVIFLPVLINFM, TMGGTIFVIAAVISVIWVAAW, VWILVISLLGYGIIGFLDDGI, IIIAVVIVLIASSDHFQFGLY, FAGVVHSIALFTIFIIFWLVG, LDGLATGLSIVAYGTYAYIAF, NFAVLAFCMSVIGGLIAFFIF, IFMGDAGSLALGGGLATVSIM, LLIGIVFVCETASVILQVISF, and VDIVFWLVGLICSILYLAIWG.

Belongs to the glycosyltransferase 4 family. MraY subfamily. Mg(2+) is required as a cofactor.

The protein localises to the cell membrane. It catalyses the reaction UDP-N-acetyl-alpha-D-muramoyl-L-alanyl-gamma-D-glutamyl-L-lysyl-D-alanyl-D-alanine + di-trans,octa-cis-undecaprenyl phosphate = Mur2Ac(oyl-L-Ala-gamma-D-Glu-L-Lys-D-Ala-D-Ala)-di-trans,octa-cis-undecaprenyl diphosphate + UMP. It participates in cell wall biogenesis; peptidoglycan biosynthesis. Its function is as follows. Catalyzes the initial step of the lipid cycle reactions in the biosynthesis of the cell wall peptidoglycan: transfers peptidoglycan precursor phospho-MurNAc-pentapeptide from UDP-MurNAc-pentapeptide onto the lipid carrier undecaprenyl phosphate, yielding undecaprenyl-pyrophosphoryl-MurNAc-pentapeptide, known as lipid I. The chain is Phospho-N-acetylmuramoyl-pentapeptide-transferase from Lactobacillus acidophilus (strain ATCC 700396 / NCK56 / N2 / NCFM).